A 175-amino-acid chain; its full sequence is NADH-quinone oxidoreductase subunit I (175 aa).

2 consecutive 4Fe-4S ferredoxin-type domains span residues 69–98 (KRDEQGRERCTSCFCCMWICPADAIYIEAA) and 115–144 (KKFEIDLLRCIFCGMCEEACPKGAIYLDGP). The [4Fe-4S] cluster site is built by cysteine 78, cysteine 81, cysteine 84, cysteine 88, cysteine 124, cysteine 127, cysteine 130, and cysteine 134.

Belongs to the complex I 23 kDa subunit family. NDH-1 is composed of 14 different subunits. Subunits NuoA, H, J, K, L, M, N constitute the membrane sector of the complex. It depends on [4Fe-4S] cluster as a cofactor.

It localises to the cell inner membrane. The catalysed reaction is a quinone + NADH + 5 H(+)(in) = a quinol + NAD(+) + 4 H(+)(out). In terms of biological role, NDH-1 shuttles electrons from NADH, via FMN and iron-sulfur (Fe-S) centers, to quinones in the respiratory chain. The immediate electron acceptor for the enzyme in this species is believed to be ubiquinone. Couples the redox reaction to proton translocation (for every two electrons transferred, four hydrogen ions are translocated across the cytoplasmic membrane), and thus conserves the redox energy in a proton gradient. The protein is NADH-quinone oxidoreductase subunit I of Leptospira interrogans serogroup Icterohaemorrhagiae serovar Lai (strain 56601).